The sequence spans 151 residues: Shadow of prion protein (151 aa).

An N-terminal signal peptide occupies residues 1 to 24 (MNWAPATCWALLLAAAFLCDSGAA). The segment at 89-113 (WRRAAGPGERGLEDEEDGVPGGNGT) is disordered. Residue Asn111 is glycosylated (N-linked (GlcNAc...) asparagine). Gly126 carries the GPI-anchor amidated glycine lipid modification. A propeptide spans 127-151 (AGPTRGPRLCLVLGGALGALGLLRP) (removed in mature form).

The protein belongs to the SPRN family. In terms of processing, N-glycosylated. As to expression, mainly expressed in brain. In brain, it is expressed in hippocampus.

The protein resides in the cell membrane. Prion-like protein that has PrP(C)-like neuroprotective activity. May act as a modulator for the biological actions of normal and abnormal PrP. This Homo sapiens (Human) protein is Shadow of prion protein (SPRN).